The primary structure comprises 234 residues: Glucosamine-6-phosphate deaminase (234 aa).

Asp62 (proton acceptor; for enolization step) is an active-site residue. Asn128 acts as the For ring-opening step in catalysis. His130 acts as the Proton acceptor; for ring-opening step in catalysis. The active-site For ring-opening step is Glu135.

The protein belongs to the glucosamine/galactosamine-6-phosphate isomerase family. NagB subfamily.

The catalysed reaction is alpha-D-glucosamine 6-phosphate + H2O = beta-D-fructose 6-phosphate + NH4(+). It functions in the pathway amino-sugar metabolism; N-acetylneuraminate degradation; D-fructose 6-phosphate from N-acetylneuraminate: step 5/5. In terms of biological role, catalyzes the reversible isomerization-deamination of glucosamine 6-phosphate (GlcN6P) to form fructose 6-phosphate (Fru6P) and ammonium ion. The chain is Glucosamine-6-phosphate deaminase from Ligilactobacillus salivarius (strain UCC118) (Lactobacillus salivarius).